The following is a 228-amino-acid chain: uncharacterized protein (228 aa).

3 residues coordinate S-adenosyl-L-methionine: Gly-179, Ile-199, and Leu-208.

This sequence belongs to the class IV-like SAM-binding methyltransferase superfamily. RNA methyltransferase TrmH family.

This is an uncharacterized protein from Borreliella burgdorferi (strain ATCC 35210 / DSM 4680 / CIP 102532 / B31) (Borrelia burgdorferi).